The sequence spans 133 residues: Transmembrane protein 60 (133 aa).

4 helical membrane passes run 5–25, 35–55, 78–98, and 110–130; these read LAQR…MLVL, WFLI…MLIV, AWYL…CAKL, and FIPL…NVFF.

Its subcellular location is the membrane. This chain is Transmembrane protein 60 (Tmem60), found in Mus musculus (Mouse).